Reading from the N-terminus, the 733-residue chain is Catalase-peroxidase 2 (733 aa).

Positions 1 to 35 are disordered; the sequence is MAEAETHPPIGESQTEPAESGCPMRIKPPVEGGSN. A cross-link (tryptophyl-tyrosyl-methioninium (Trp-Tyr) (with M-260)) is located at residues 106–234; sequence WHAAGTYRVE…PXXPHMGLIY (129 aa). The Proton acceptor role is filled by H107. Positions 234-260 form a cross-link, tryptophyl-tyrosyl-methioninium (Tyr-Met) (with W-106); sequence YVNPEGPEGNPDYLAAAIDIRETFGRM. H275 is a binding site for heme.

It belongs to the peroxidase family. Peroxidase/catalase subfamily. As to quaternary structure, homodimer or homotetramer. Requires heme b as cofactor. Formation of the three residue Trp-Tyr-Met cross-link is important for the catalase, but not the peroxidase activity of the enzyme.

The catalysed reaction is H2O2 + AH2 = A + 2 H2O. It catalyses the reaction 2 H2O2 = O2 + 2 H2O. Bifunctional enzyme with both catalase and broad-spectrum peroxidase activity. May play a role in the intracellular survival of mycobacteria. The polypeptide is Catalase-peroxidase 2 (Mycolicibacterium fortuitum (Mycobacterium fortuitum)).